The sequence spans 446 residues: Hepatocyte nuclear factor 4-beta (446 aa).

Positions 47-122 (NSFCAICGDR…AGMKKEAVQN (76 aa)) form a DNA-binding region, nuclear receptor. 2 NR C4-type zinc fingers span residues 50–70 (CAICGDRATGKHYGASSCDGC) and 86–110 (CRFSRQCIVDKDKRNQCRYCRLRKC). Residues 137-366 (NGSLSINVLT…SLLQELLLGG (230 aa)) enclose the NR LBD domain.

It belongs to the nuclear hormone receptor family. NR2 subfamily. In terms of assembly, homodimerization is required for HNF4-alpha to bind to its recognition site. Expressed in liver, kidney, stomach, intestine, lung, ovary, and testis. Not expressed in fat, muscle and brain.

The protein resides in the nucleus. Transcription factor; binds and activates the promoter for the HNF1-alpha gene. Seems to have a lower DNA binding activity than HNF4-alpha and is a weaker transactivator than the alpha isoform. The sequence is that of Hepatocyte nuclear factor 4-beta (hnf4b) from Xenopus laevis (African clawed frog).